The chain runs to 268 residues: Myeloid leukemia factor 1 (268 aa).

Phosphoserine is present on residues serine 8, serine 32, and serine 34. 2 disordered regions span residues 44 to 66 (ISDG…SLTH) and 209 to 268 (GRHN…SNKK). The tract at residues 50 to 125 (RAHNRRGHND…IGDEPPKVFQ (76 aa)) is interaction with COPS3. Composition is skewed to basic and acidic residues over residues 56–65 (GHNDGEDSLT) and 226–237 (PGSRELKRREKP).

It belongs to the MLF family. In terms of assembly, interacts with CENPU. Also interacts with NRBP1/MADM, YWHAZ/14-3-3-zeta and HNRPUL2/MANP. NRBP1 recruits a serine kinase which phosphorylates both itself and MLF1. Phosphorylated MLF1 then binds to YWHAZ and is retained in the cytoplasm. Retained in the nucleus by binding to HNRPUL2. Binds to COPS3/CSN3 which is required for suppression of COP1 and activation of p53. Post-translationally, phosphorylation is required for binding to YWHAZ. As to expression, most abundant in testis, ovary, skeletal muscle, heart, kidney and colon. Low expression in spleen, thymus and peripheral blood leukocytes.

Its subcellular location is the cytoplasm. It localises to the nucleus. The protein resides in the cell projection. The protein localises to the cilium. It is found in the cytoskeleton. Its subcellular location is the cilium basal body. Its function is as follows. Involved in lineage commitment of primary hemopoietic progenitors by restricting erythroid formation and enhancing myeloid formation. Interferes with erythropoietin-induced erythroid terminal differentiation by preventing cells from exiting the cell cycle through suppression of CDKN1B/p27Kip1 levels. Suppresses COP1 activity via CSN3 which activates p53 and induces cell cycle arrest. Binds DNA and affects the expression of a number of genes so may function as a transcription factor in the nucleus. The polypeptide is Myeloid leukemia factor 1 (MLF1) (Homo sapiens (Human)).